The primary structure comprises 294 residues: MNNQASRLDNLMNIKNPKSFFDNKGNTKFIAITSGKGGVGKSNISANLAYSLYKKGYKVGVFDADIGLANLDVIFGVKTHKNILHALKGEAKLQEIICEIEPGLCLIPGDSGEEILKYISGAEALDQFVDEEGVLSSLDYIVVDTGAGIGATTQAFLNASDCVVIVTTPDPSAITDAYACIKINSKNKDELFLIANMVAQPKEGRATYERLFKVAKNNIASLELHYLGAIENSSLLKRYVRERKILRKIAPNDLFSQSIDQIAGLLVSKLETGALEIPKEGLKSFFKRLLKYLG.

35-42 (GKGGVGKS) is a binding site for ATP.

It belongs to the ParA family.

In terms of biological role, involved in the placement and assembly of flagella. The sequence is that of Flagellum site-determining protein YlxH (ylxH) from Helicobacter pylori (strain ATCC 700392 / 26695) (Campylobacter pylori).